Consider the following 200-residue polypeptide: Male-specific histamine-binding salivary protein (200 aa).

Positions 1-18 (MKVLLLVLGAALCQNADA) are cleaved as a signal peptide. Residues S37, D41, D56, and W59 each contribute to the histamine site. 2 disulfide bridges follow: C65-C193 and C137-C169. An N-linked (GlcNAc...) asparagine glycan is attached at N79. 6 residues coordinate histamine: E97, Y115, F125, D138, E154, and W156.

It belongs to the calycin superfamily. Histamine-binding salivary protein family. In terms of assembly, homodimer; disulcde-linked. Post-translationally, N-glycosylated. In terms of tissue distribution, expressed in salivary glands.

It localises to the secreted. In terms of biological role, salivary tick protein that acts by scavenging histamine at the wound site, outcompeting histamine receptors for histamine, thereby overcoming host inflammatory responses. Binds histamine with a high-affinity (Kd=1.2 nM). Contains two binding histamine sites (H and L), that appear to bind histamine with differing affinities. This chain is Male-specific histamine-binding salivary protein, found in Rhipicephalus appendiculatus (Brown ear tick).